Reading from the N-terminus, the 465-residue chain is UDP-N-acetylmuramate--L-alanine ligase (465 aa).

114 to 120 (GTHGKTT) is an ATP binding site.

It belongs to the MurCDEF family.

It is found in the cytoplasm. It carries out the reaction UDP-N-acetyl-alpha-D-muramate + L-alanine + ATP = UDP-N-acetyl-alpha-D-muramoyl-L-alanine + ADP + phosphate + H(+). Its pathway is cell wall biogenesis; peptidoglycan biosynthesis. Functionally, cell wall formation. The polypeptide is UDP-N-acetylmuramate--L-alanine ligase (Chlorobium phaeobacteroides (strain BS1)).